The chain runs to 231 residues: 7-cyano-7-deazaguanine synthase (231 aa).

Residue 8-18 (FSGGQDSTTCL) participates in ATP binding. Residues cysteine 188, cysteine 197, cysteine 200, and cysteine 203 each contribute to the Zn(2+) site.

Belongs to the QueC family. Requires Zn(2+) as cofactor.

It catalyses the reaction 7-carboxy-7-deazaguanine + NH4(+) + ATP = 7-cyano-7-deazaguanine + ADP + phosphate + H2O + H(+). It participates in purine metabolism; 7-cyano-7-deazaguanine biosynthesis. Functionally, catalyzes the ATP-dependent conversion of 7-carboxy-7-deazaguanine (CDG) to 7-cyano-7-deazaguanine (preQ(0)). This is 7-cyano-7-deazaguanine synthase from Salmonella paratyphi A (strain ATCC 9150 / SARB42).